The following is a 257-amino-acid chain: MRDTMEILRTENIVKYFGEFKALDGVSISVNKGDVTLIIGPNGSGKSTLINVITGFLKADEGRVYFENKDITNKEPAELYHYGIVRTFQTPQPLKEMTVLENLLIGEINPGESPLNSLFYKKWIPKEEEMVEKAFKILEFLKLSHLYDRKAGELSGGQMKLVEIGRALMTNPKMIVMDEPIAGVAPGLAHDIFNHVLELKAKGITFLIIEHRLDIVLNYIDHLYVMFNGQIIAEGRGEEEIKNVLSDPKVVEIYIGE.

The 246-residue stretch at 8–253 (LRTENIVKYF…VLSDPKVVEI (246 aa)) folds into the ABC transporter domain. ATP is bound at residue 40 to 47 (GPNGSGKS).

Belongs to the ABC transporter superfamily. Monomer.

Probable component of a branched-chain amino-acid transport system. This Methanocaldococcus jannaschii (strain ATCC 43067 / DSM 2661 / JAL-1 / JCM 10045 / NBRC 100440) (Methanococcus jannaschii) protein is Probable branched-chain amino acid transport ATP-binding protein LivG (livG).